A 296-amino-acid chain; its full sequence is Phosphatidylglycerol--prolipoprotein diacylglyceryl transferase (296 aa).

4 consecutive transmembrane segments (helical) span residues 10-30 (IAFS…LAAF), 57-77 (LLFY…MLFY), 92-112 (VWEG…ACGL), and 119-139 (LHFF…LGFG). R140 is a binding site for a 1,2-diacyl-sn-glycero-3-phospho-(1'-sn-glycerol). The next 3 helical transmembrane spans lie at 194–214 (QLYE…TFSM), 220–240 (YAVS…VEFV), and 255–275 (LTMG…LLAL).

Belongs to the Lgt family.

The protein localises to the cell inner membrane. It catalyses the reaction L-cysteinyl-[prolipoprotein] + a 1,2-diacyl-sn-glycero-3-phospho-(1'-sn-glycerol) = an S-1,2-diacyl-sn-glyceryl-L-cysteinyl-[prolipoprotein] + sn-glycerol 1-phosphate + H(+). It participates in protein modification; lipoprotein biosynthesis (diacylglyceryl transfer). Functionally, catalyzes the transfer of the diacylglyceryl group from phosphatidylglycerol to the sulfhydryl group of the N-terminal cysteine of a prolipoprotein, the first step in the formation of mature lipoproteins. This is Phosphatidylglycerol--prolipoprotein diacylglyceryl transferase from Xanthomonas campestris pv. campestris (strain 8004).